A 403-amino-acid polypeptide reads, in one-letter code: Aminomethyltransferase, mitochondrial (403 aa).

The N-terminal 28 residues, 1 to 28 (MHRIVSVVAPLGFRLQAQPLVQSRPLSS), are a transit peptide targeting the mitochondrion. The substrate site is built by E232 and R261. Position 368 is an N6-succinyllysine (K368). A substrate-binding site is contributed by Y399.

Belongs to the GcvT family. In terms of assembly, the glycine cleavage system is composed of four proteins: P, T, L and H.

It is found in the mitochondrion. It catalyses the reaction N(6)-[(R)-S(8)-aminomethyldihydrolipoyl]-L-lysyl-[protein] + (6S)-5,6,7,8-tetrahydrofolate = N(6)-[(R)-dihydrolipoyl]-L-lysyl-[protein] + (6R)-5,10-methylene-5,6,7,8-tetrahydrofolate + NH4(+). In terms of biological role, the glycine cleavage system catalyzes the degradation of glycine. This Mus musculus (Mouse) protein is Aminomethyltransferase, mitochondrial.